A 224-amino-acid chain; its full sequence is Holliday junction branch migration complex subunit RuvA (224 aa).

Positions 1 to 67 (MISWLKGEKV…EDGTSLYGFI (67 aa)) are domain I. A domain II region spans residues 68-146 (EVNQRDLFRE…RFTDNDKTIH (79 aa)). The interval 147 to 155 (ENKKGIEAN) is flexible linker. The interval 156–224 (QFSKYIDEIY…ILMKLSEKTT (69 aa)) is domain III.

It belongs to the RuvA family. As to quaternary structure, homotetramer. Forms an RuvA(8)-RuvB(12)-Holliday junction (HJ) complex. HJ DNA is sandwiched between 2 RuvA tetramers; dsDNA enters through RuvA and exits via RuvB. An RuvB hexamer assembles on each DNA strand where it exits the tetramer. Each RuvB hexamer is contacted by two RuvA subunits (via domain III) on 2 adjacent RuvB subunits; this complex drives branch migration. In the full resolvosome a probable DNA-RuvA(4)-RuvB(12)-RuvC(2) complex forms which resolves the HJ.

It localises to the cytoplasm. In terms of biological role, the RuvA-RuvB-RuvC complex processes Holliday junction (HJ) DNA during genetic recombination and DNA repair, while the RuvA-RuvB complex plays an important role in the rescue of blocked DNA replication forks via replication fork reversal (RFR). RuvA specifically binds to HJ cruciform DNA, conferring on it an open structure. The RuvB hexamer acts as an ATP-dependent pump, pulling dsDNA into and through the RuvAB complex. HJ branch migration allows RuvC to scan DNA until it finds its consensus sequence, where it cleaves and resolves the cruciform DNA. This chain is Holliday junction branch migration complex subunit RuvA, found in Prochlorococcus marinus (strain NATL1A).